We begin with the raw amino-acid sequence, 521 residues long: Alkyl hydroperoxide reductase subunit F (521 aa).

An FAD-binding site is contributed by D213 to I228. Cysteines 344 and 347 form a disulfide. An NAD(+)-binding site is contributed by R356–A370. Residue T477–D487 participates in FAD binding.

Belongs to the class-II pyridine nucleotide-disulfide oxidoreductase family. Homodimer. FAD is required as a cofactor.

Functionally, serves to protect the cell against DNA damage by alkyl hydroperoxides. It can use either NADH or NADPH as electron donor for direct reduction of redox dyes or of alkyl hydroperoxides when combined with the AhpC protein. This Pseudomonas aeruginosa (strain ATCC 15692 / DSM 22644 / CIP 104116 / JCM 14847 / LMG 12228 / 1C / PRS 101 / PAO1) protein is Alkyl hydroperoxide reductase subunit F (ahpF).